The following is a 329-amino-acid chain: GTP 3',8-cyclase (329 aa).

The Radical SAM core domain occupies 8–234 (VFARKFYYLR…QLRQRSDGPA (227 aa)). Arginine 17 lines the GTP pocket. [4Fe-4S] cluster is bound by residues cysteine 24 and cysteine 28. Tyrosine 30 provides a ligand contact to S-adenosyl-L-methionine. Position 31 (cysteine 31) interacts with [4Fe-4S] cluster. Position 68 (arginine 68) interacts with GTP. Glycine 72 provides a ligand contact to S-adenosyl-L-methionine. Position 99 (threonine 99) interacts with GTP. Position 123 (serine 123) interacts with S-adenosyl-L-methionine. Lysine 160 contributes to the GTP binding site. Methionine 194 lines the S-adenosyl-L-methionine pocket. [4Fe-4S] cluster-binding residues include cysteine 257 and cysteine 260. 262 to 264 (RLR) contacts GTP. A [4Fe-4S] cluster-binding site is contributed by cysteine 274.

It belongs to the radical SAM superfamily. MoaA family. Monomer and homodimer. [4Fe-4S] cluster serves as cofactor.

The enzyme catalyses GTP + AH2 + S-adenosyl-L-methionine = (8S)-3',8-cyclo-7,8-dihydroguanosine 5'-triphosphate + 5'-deoxyadenosine + L-methionine + A + H(+). Its pathway is cofactor biosynthesis; molybdopterin biosynthesis. Catalyzes the cyclization of GTP to (8S)-3',8-cyclo-7,8-dihydroguanosine 5'-triphosphate. The chain is GTP 3',8-cyclase from Shigella flexneri.